Here is a 106-residue protein sequence, read N- to C-terminus: MTEKMHELKITIFTDKGRSTISGIDFPLPVLPYPAPYTFRLYGYKIEGPNLTNKEFKVKTGKIEYKGEEFDIPPSSKGSWRGVDEEMDLTYVTIYPSRQPKKVFHY.

This sequence belongs to the csb family.

This is an uncharacterized protein from Dictyostelium discoideum (Social amoeba).